A 252-amino-acid polypeptide reads, in one-letter code: Flap endonuclease Xni (252 aa).

Mg(2+) is bound at residue aspartate 105. The 5'-3' exonuclease domain maps to 162–251 (EQYQFLDFIA…EINLKQFRVK (90 aa)). 5 residues coordinate K(+): leucine 172, alanine 173, proline 181, isoleucine 183, and isoleucine 186. The interval 185–190 (GIGPKS) is interaction with DNA.

It belongs to the Xni family. Mg(2+) serves as cofactor. It depends on K(+) as a cofactor.

In terms of biological role, has flap endonuclease activity. During DNA replication, flap endonucleases cleave the 5'-overhanging flap structure that is generated by displacement synthesis when DNA polymerase encounters the 5'-end of a downstream Okazaki fragment. The chain is Flap endonuclease Xni from Shewanella denitrificans (strain OS217 / ATCC BAA-1090 / DSM 15013).